The following is a 90-amino-acid chain: Putative Fis-like DNA-binding protein (90 aa).

The segment at residues 66–85 is a DNA-binding region (H-T-H motif); that stretch reads QSRAAALLGIHRATLRKKLK.

The protein belongs to the transcriptional regulatory Fis family.

The protein is Putative Fis-like DNA-binding protein of Xylella fastidiosa (strain Temecula1 / ATCC 700964).